A 158-amino-acid polypeptide reads, in one-letter code: Probable transcription regulator ArfM (158 aa).

In terms of biological role, activates, in anaerobic conditions, the transcription of the fermentative operons lctEP and alsDS, of the hmp gene encoding a flavohemoglobin-like protein, the nitrite reductase operon nasDE and the heme biosynthesis genes hemN and hemZ. This chain is Probable transcription regulator ArfM (arfM), found in Bacillus subtilis (strain 168).